The following is a 440-amino-acid chain: Xaa-Pro dipeptidase (440 aa).

Residues Asp-241, Asp-252, His-333, Glu-378, and Glu-417 each contribute to the Mn(2+) site.

The protein belongs to the peptidase M24B family. Bacterial-type prolidase subfamily. Mn(2+) is required as a cofactor.

It carries out the reaction Xaa-L-Pro dipeptide + H2O = an L-alpha-amino acid + L-proline. Splits dipeptides with a prolyl residue in the C-terminal position. This chain is Xaa-Pro dipeptidase, found in Glaesserella parasuis serovar 5 (strain SH0165) (Haemophilus parasuis).